The sequence spans 261 residues: Pyridoxine-5'-phosphate oxidase (261 aa).

42–45 (RGDR) provides a ligand contact to pyridoxal 5'-phosphate. 95–98 (RMLL) serves as a coordination point for FMN. A pyridoxal 5'-phosphate-binding site is contributed by Lys100. FMN is bound by residues 110 to 111 (FT), 116 to 117 (RK), and Gln139. Positions 157, 161, and 165 each coordinate pyridoxal 5'-phosphate. Residues 174 to 175 (QS) and Trp219 each bind FMN. 225–227 (RLH) is a binding site for pyridoxal 5'-phosphate. Arg229 lines the FMN pocket. Thr238 carries the post-translational modification Phosphothreonine. Phosphoserine is present on Ser241.

The protein belongs to the pyridoxamine 5'-phosphate oxidase family. As to quaternary structure, homodimer. FMN is required as a cofactor. In terms of tissue distribution, ubiquitous. Expressed in liver, brain, lung, prostate and stomach (at protein level).

The catalysed reaction is pyridoxine 5'-phosphate + O2 = pyridoxal 5'-phosphate + H2O2. It carries out the reaction pyridoxamine 5'-phosphate + O2 + H2O = pyridoxal 5'-phosphate + H2O2 + NH4(+). It participates in cofactor metabolism; pyridoxal 5'-phosphate salvage; pyridoxal 5'-phosphate from pyridoxamine 5'-phosphate: step 1/1. Its pathway is cofactor metabolism; pyridoxal 5'-phosphate salvage; pyridoxal 5'-phosphate from pyridoxine 5'-phosphate: step 1/1. Functionally, catalyzes the oxidation of either pyridoxine 5'-phosphate (PNP) or pyridoxamine 5'-phosphate (PMP) into pyridoxal 5'-phosphate (PLP). The polypeptide is Pyridoxine-5'-phosphate oxidase (PNPO) (Homo sapiens (Human)).